Reading from the N-terminus, the 194-residue chain is Erythropoietin (194 aa).

A signal peptide spans 1-26 (MGARECPARLLLLSLLLLPLGLPVLG). 2 cysteine pairs are disulfide-bonded: Cys-33–Cys-189 and Cys-55–Cys-59. N-linked (GlcNAc...) asparagine glycosylation occurs at Asn-50. Asn-64, Asn-109, and Asn-172 each carry an N-linked (GlcNAc...) asparagine glycan.

Belongs to the EPO/TPO family. As to expression, produced by kidney or liver of adult mammals and by liver of fetal or neonatal mammals.

The protein resides in the secreted. Its function is as follows. Hormone involved in the regulation of erythrocyte proliferation and differentiation and the maintenance of a physiological level of circulating erythrocyte mass. Binds to EPOR leading to EPOR dimerization and JAK2 activation thereby activating specific downstream effectors, including STAT1 and STAT3. The protein is Erythropoietin (EPO) of Sus scrofa (Pig).